Reading from the N-terminus, the 292-residue chain is MKQYFNCIGIVGRPRHSTALITHEILYKWLIKKGYQVFIEYNISKKLNLKNPKTATLIEIGRLCDLAIVIGGDGNLLFTARILSYFNIKIIGINCGNLGFLTDLNPDNKFKKLSEVLSGKYFVENRFLLDVMIYKKEQVSKSSIAINEVVLHPKNVAHMIEFEVYINDNFAFSQRSDGLIISTPTGSTGYSLSAGGPIIETSLESILLVPMFPHTLSARPLLIRSDSVIRLRFSDIETDLKISCDSQIVLPVKKKEYVFIRRSNYYLNLIHPKSYNYFETLTSKLNWSKKFF.

Residue Asp73 is the Proton acceptor of the active site. Residues 73–74 (DG), 147–148 (NE), His158, Arg175, Asp177, 188–193 (TGYSLS), and Gln247 contribute to the NAD(+) site.

It belongs to the NAD kinase family. It depends on a divalent metal cation as a cofactor.

The protein resides in the cytoplasm. It carries out the reaction NAD(+) + ATP = ADP + NADP(+) + H(+). Functionally, involved in the regulation of the intracellular balance of NAD and NADP, and is a key enzyme in the biosynthesis of NADP. Catalyzes specifically the phosphorylation on 2'-hydroxyl of the adenosine moiety of NAD to yield NADP. The polypeptide is NAD kinase (Buchnera aphidicola subsp. Schizaphis graminum (strain Sg)).